A 419-amino-acid chain; its full sequence is Keratin, type II cytoskeletal I (419 aa).

The interval 1–16 is linker 1; it reads KGSTKRANLDPLFEKY. The IF rod domain occupies 1-275; the sequence is KGSTKRANLD…YMLEGEEGRM (275 aa). The coil 1B stretch occupies residues 17-108; sequence ISDLKRYLDN…TLFAAELSQV (92 aa). Positions 109–132 are linker 12; it reads HDQVTDTSVVLTMDNNRDLNLDSI. The interval 133–271 is coil 2; sequence IKEVKCQYEQ…STYRYMLEGE (139 aa). Residues 272–419 form a tail region; the sequence is EGRMSGQISN…STTSTTKRSY (148 aa).

It belongs to the intermediate filament family. As to quaternary structure, heterotetramer of two type I and two type II keratins.

This chain is Keratin, type II cytoskeletal I, found in Xenopus laevis (African clawed frog).